Here is a 160-residue protein sequence, read N- to C-terminus: Sulfur-rich protein (160 aa).

2 consecutive transmembrane segments (helical) span residues 62 to 82 (ITMV…TFVL) and 91 to 111 (FLFL…SVFM).

The protein resides in the membrane. The protein is Sulfur-rich protein (srp) of Chlamydia caviae (strain ATCC VR-813 / DSM 19441 / 03DC25 / GPIC) (Chlamydophila caviae).